Consider the following 250-residue polypeptide: MTDDVSRETPSVPDVARRVFASDRLSLAERFVELLAGDGVVRGLIGPRETPRLWDRHLLNCALLAQQVPLEATVADLGSGAGLPGVVLAIARPDLRVTLVEPLLRRTTFLEEVVAELGLDRVEVLRARAEALHGDRRFAVVTSRALAPLDRLLGWSMPLVEPTGALLAMKGSAVAEEITAAGPELARWGCATPEVLSLGADLGLAPTVAVRVVWADPGRVSWPIAAPRKRGGQQRRAGHARGTSNRRRGT.

S-adenosyl-L-methionine contacts are provided by residues glycine 78, leucine 83, 129–130 (AE), and arginine 144. A disordered region spans residues 224–250 (IAAPRKRGGQQRRAGHARGTSNRRRGT). Basic residues predominate over residues 227–250 (PRKRGGQQRRAGHARGTSNRRRGT).

It belongs to the methyltransferase superfamily. RNA methyltransferase RsmG family.

It is found in the cytoplasm. Functionally, specifically methylates the N7 position of guanine in position 518 of 16S rRNA. The polypeptide is Ribosomal RNA small subunit methyltransferase G (Nocardioides sp. (strain ATCC BAA-499 / JS614)).